The primary structure comprises 152 residues: Large ribosomal subunit protein uL13 (152 aa).

This sequence belongs to the universal ribosomal protein uL13 family. In terms of assembly, part of the 50S ribosomal subunit.

Its function is as follows. This protein is one of the early assembly proteins of the 50S ribosomal subunit, although it is not seen to bind rRNA by itself. It is important during the early stages of 50S assembly. The polypeptide is Large ribosomal subunit protein uL13 (Neorickettsia sennetsu (strain ATCC VR-367 / Miyayama) (Ehrlichia sennetsu)).